The sequence spans 552 residues: Chaperonin GroEL (552 aa).

ATP is bound by residues 29-32, lysine 50, 86-90, glycine 420, and aspartate 501; these read TAGP and DGTTT.

The protein belongs to the chaperonin (HSP60) family. As to quaternary structure, forms a cylinder of 14 subunits composed of two heptameric rings stacked back-to-back. Interacts with the co-chaperonin GroES.

The protein localises to the cytoplasm. The enzyme catalyses ATP + H2O + a folded polypeptide = ADP + phosphate + an unfolded polypeptide.. In terms of biological role, together with its co-chaperonin GroES, plays an essential role in assisting protein folding. The GroEL-GroES system forms a nano-cage that allows encapsulation of the non-native substrate proteins and provides a physical environment optimized to promote and accelerate protein folding. The chain is Chaperonin GroEL from Wolbachia pipientis subsp. Culex pipiens (strain wPip).